The following is a 252-amino-acid chain: 5-oxoprolinase subunit A 1 (252 aa).

This sequence belongs to the LamB/PxpA family. Forms a complex composed of PxpA, PxpB and PxpC.

The enzyme catalyses 5-oxo-L-proline + ATP + 2 H2O = L-glutamate + ADP + phosphate + H(+). Its function is as follows. Catalyzes the cleavage of 5-oxoproline to form L-glutamate coupled to the hydrolysis of ATP to ADP and inorganic phosphate. This is 5-oxoprolinase subunit A 1 from Pseudomonas putida (strain ATCC 47054 / DSM 6125 / CFBP 8728 / NCIMB 11950 / KT2440).